Consider the following 424-residue polypeptide: Glutamate-1-semialdehyde 2,1-aminomutase (424 aa).

The residue at position 258 (K258) is an N6-(pyridoxal phosphate)lysine.

The protein belongs to the class-III pyridoxal-phosphate-dependent aminotransferase family. HemL subfamily. It depends on pyridoxal 5'-phosphate as a cofactor.

The protein localises to the cytoplasm. The enzyme catalyses (S)-4-amino-5-oxopentanoate = 5-aminolevulinate. It participates in porphyrin-containing compound metabolism; protoporphyrin-IX biosynthesis; 5-aminolevulinate from L-glutamyl-tRNA(Glu): step 2/2. The polypeptide is Glutamate-1-semialdehyde 2,1-aminomutase (Pyrobaculum neutrophilum (strain DSM 2338 / JCM 9278 / NBRC 100436 / V24Sta) (Thermoproteus neutrophilus)).